The chain runs to 216 residues: Adenylate kinase (216 aa).

ATP is bound at residue 10-15 (GAGKGT). The interval 30 to 59 (STGDIFRAHMSQGTPLGKLAKEYVDAGKYV) is NMP. AMP-binding positions include threonine 31, arginine 36, 57 to 59 (KYV), 85 to 88 (GYPR), and glutamine 92. The LID stretch occupies residues 126–163 (GRRVCRSCGATYHVRFNPPREAGRCDRCGGELYQRSDD). Arginine 127 serves as a coordination point for ATP. Zn(2+) contacts are provided by cysteine 130 and cysteine 133. 136–137 (TY) lines the ATP pocket. Residues cysteine 150 and cysteine 153 each contribute to the Zn(2+) site. Residues arginine 160 and arginine 171 each coordinate AMP. Glutamine 199 serves as a coordination point for ATP.

This sequence belongs to the adenylate kinase family. In terms of assembly, monomer.

The protein resides in the cytoplasm. The catalysed reaction is AMP + ATP = 2 ADP. Its pathway is purine metabolism; AMP biosynthesis via salvage pathway; AMP from ADP: step 1/1. Functionally, catalyzes the reversible transfer of the terminal phosphate group between ATP and AMP. Plays an important role in cellular energy homeostasis and in adenine nucleotide metabolism. This Symbiobacterium thermophilum (strain DSM 24528 / JCM 14929 / IAM 14863 / T) protein is Adenylate kinase.